The following is an 846-amino-acid chain: Neurotactin (846 aa).

The interval 1 to 222 (MGELEEKETP…EDASDAPPKR (222 aa)) is disordered. Topologically, residues 1-324 (MGELEEKETP…LRGYKCSVDD (324 aa)) are cytoplasmic. Low complexity predominate over residues 11 to 20 (PTETTAAQQE). Positions 23–42 (EEPKETDKMLDKKEDAKEKT) are enriched in basic and acidic residues. Thr28 is subject to Phosphothreonine; by PKC. The residue at position 42 (Thr42) is a Phosphothreonine. Ser44 carries the post-translational modification Phosphoserine. Thr47 bears the Phosphothreonine mark. A phosphoserine mark is found at Ser48 and Ser52. Residues 63–74 (AEKKIDDAELAK) show a composition bias toward basic and acidic residues. A Phosphoserine; by PKC modification is found at Ser75. Phosphoserine is present on Ser77. Basic and acidic residues-rich tracts occupy residues 95 to 111 (DSAD…EVKP), 141 to 155 (LLEK…KEAN), 163 to 178 (GKDE…ERLR), and 185 to 205 (PSAE…KSEA). Ser103 bears the Phosphoserine; by PKC mark. Ser169 bears the Phosphoserine; by PKC mark. A phosphoserine mark is found at Ser186 and Ser203. A Phosphothreonine modification is found at Thr206. Ser256 carries the phosphoserine modification. Thr259 is subject to Phosphothreonine. Residue Ser263 is modified to Phosphoserine. Position 269 is a phosphothreonine (Thr269). The helical; Signal-anchor for type II membrane protein transmembrane segment at 325–346 (ALIVFGILLFVLLLGVIGYVLT) threads the bilayer. Over 347-846 (HETLTSPPLR…DIVPRYARVD (500 aa)) the chain is Extracellular. Residues Asn410, Asn417, and Asn428 are each glycosylated (N-linked (GlcNAc...) asparagine). 2 cysteine pairs are disulfide-bonded: Cys422–Cys437 and Cys600–Cys605. Asn636, Asn691, and Asn720 each carry an N-linked (GlcNAc...) asparagine glycan. Cys738 and Cys830 are disulfide-bonded.

The protein in the C-terminal section; belongs to the type-B carboxylesterase/lipase family. As to expression, late in embryogenesis, expression is restricted to cells of the peripheral and central nervous system undergoing proliferation and differentiation. Also expressed in larval CNS, mesoderm and imaginal disks.

The protein resides in the membrane. May mediate or modulate cell adhesion between embryonic cells during development. The sequence is that of Neurotactin (Nrt) from Drosophila melanogaster (Fruit fly).